The chain runs to 257 residues: Ribosomal RNA small subunit methyltransferase J (257 aa).

Residues 107-108, 123-124, and D177 each bind S-adenosyl-L-methionine; these read RD and ER.

Belongs to the methyltransferase superfamily. RsmJ family.

Its subcellular location is the cytoplasm. It catalyses the reaction guanosine(1516) in 16S rRNA + S-adenosyl-L-methionine = N(2)-methylguanosine(1516) in 16S rRNA + S-adenosyl-L-homocysteine + H(+). Functionally, specifically methylates the guanosine in position 1516 of 16S rRNA. The polypeptide is Ribosomal RNA small subunit methyltransferase J (Haemophilus influenzae (strain PittEE)).